The sequence spans 572 residues: Phosphoenolpyruvate-protein phosphotransferase (572 aa).

His191 acts as the Tele-phosphohistidine intermediate in catalysis. Phosphoenolpyruvate is bound by residues Arg298 and Arg334. Glu433 and Asp457 together coordinate Mg(2+). Residues 456 to 457 (ND) and Arg467 contribute to the phosphoenolpyruvate site. The Proton donor role is filled by Cys504.

This sequence belongs to the PEP-utilizing enzyme family. In terms of assembly, homodimer. The cofactor is Mg(2+).

It localises to the cytoplasm. It catalyses the reaction L-histidyl-[protein] + phosphoenolpyruvate = N(pros)-phospho-L-histidyl-[protein] + pyruvate. In terms of biological role, general (non sugar-specific) component of the phosphoenolpyruvate-dependent sugar phosphotransferase system (sugar PTS). This major carbohydrate active-transport system catalyzes the phosphorylation of incoming sugar substrates concomitantly with their translocation across the cell membrane. Enzyme I transfers the phosphoryl group from phosphoenolpyruvate (PEP) to the phosphoryl carrier protein (HPr). In Staphylococcus aureus (strain MSSA476), this protein is Phosphoenolpyruvate-protein phosphotransferase.